Reading from the N-terminus, the 106-residue chain is Urease subunit beta (106 aa).

Belongs to the urease beta subunit family. As to quaternary structure, heterotrimer of UreA (gamma), UreB (beta) and UreC (alpha) subunits. Three heterotrimers associate to form the active enzyme.

The protein localises to the cytoplasm. It catalyses the reaction urea + 2 H2O + H(+) = hydrogencarbonate + 2 NH4(+). It participates in nitrogen metabolism; urea degradation; CO(2) and NH(3) from urea (urease route): step 1/1. This chain is Urease subunit beta, found in Prochlorococcus marinus (strain NATL1A).